The following is a 170-amino-acid chain: Peptide deformylase (170 aa).

Fe cation-binding residues include C88 and H130. The active site involves E131. Position 134 (H134) interacts with Fe cation.

The protein belongs to the polypeptide deformylase family. Requires Fe(2+) as cofactor.

It catalyses the reaction N-terminal N-formyl-L-methionyl-[peptide] + H2O = N-terminal L-methionyl-[peptide] + formate. Functionally, removes the formyl group from the N-terminal Met of newly synthesized proteins. Requires at least a dipeptide for an efficient rate of reaction. N-terminal L-methionine is a prerequisite for activity but the enzyme has broad specificity at other positions. In Acetivibrio thermocellus (strain ATCC 27405 / DSM 1237 / JCM 9322 / NBRC 103400 / NCIMB 10682 / NRRL B-4536 / VPI 7372) (Clostridium thermocellum), this protein is Peptide deformylase.